Here is a 173-residue protein sequence, read N- to C-terminus: RNA pyrophosphohydrolase (173 aa).

The Nudix hydrolase domain occupies 11 to 164; it reads PYRKCVGILV…KKHVYTQVVK (154 aa). A Nudix box motif is present at residues 52-73; sequence GGINQGEKPIDAARRELYEETG.

This sequence belongs to the Nudix hydrolase family. RppH subfamily. It depends on a divalent metal cation as a cofactor.

Accelerates the degradation of transcripts by removing pyrophosphate from the 5'-end of triphosphorylated RNA, leading to a more labile monophosphorylated state that can stimulate subsequent ribonuclease cleavage. This Bartonella clarridgeiae protein is RNA pyrophosphohydrolase.